The following is a 153-amino-acid chain: 3-hydroxyacyl-[acyl-carrier-protein] dehydratase FabZ (153 aa).

Histidine 54 is a catalytic residue.

Belongs to the thioester dehydratase family. FabZ subfamily.

The protein localises to the cytoplasm. It catalyses the reaction a (3R)-hydroxyacyl-[ACP] = a (2E)-enoyl-[ACP] + H2O. Functionally, involved in unsaturated fatty acids biosynthesis. Catalyzes the dehydration of short chain beta-hydroxyacyl-ACPs and long chain saturated and unsaturated beta-hydroxyacyl-ACPs. The sequence is that of 3-hydroxyacyl-[acyl-carrier-protein] dehydratase FabZ from Shewanella sediminis (strain HAW-EB3).